A 1025-amino-acid chain; its full sequence is Protein mono-ADP-ribosyltransferase PARP10 (1025 aa).

The residue at position 101 (T101) is a Phosphothreonine. At E106 the chain carries ADP-ribosyl glutamic acid. K140 carries the post-translational modification N6-(ADP-ribosyl)lysine. Residues 318–346 (GIMTTGSGQEPGQSGTSLRTGPMGSLGQA) form a disordered region. The span at 321-336 (TTGSGQEPGQSGTSLR) shows a compositional bias: polar residues. Phosphoserine occurs at positions 378, 423, and 431. Disordered regions lie at residues 569 to 589 (VLPG…DQED) and 617 to 644 (LEEE…APST). Acidic residues predominate over residues 617 to 639 (LEEEGPQEQPEEEVTPGHEEEEP). 2 consecutive short sequence motifs (ubiquitin-interacting) follow at residues 650 to 667 (LEEE…LEPQ) and 673 to 690 (QEEA…LLEQ). S663 is subject to Phosphoserine. The tract at residues 700 to 907 (DGGTDGKAQL…CAHGFNRSFC (208 aa)) is myc binding. The PARP catalytic domain maps to 806–1025 (PTLAGQTLKG…SGLPGRSPDT (220 aa)). Residues 831–838 (QEVVRAFY) carry the PIP-box motif. The residue at position 882 (E882) is an ADP-ribosyl glutamic acid. K916 bears the N6-(ADP-ribosyl)lysine mark. At K916 the chain carries N6-acetyllysine. The disordered stretch occupies residues 1006–1025 (HVPRASPDDPSGLPGRSPDT). S1011 is modified (phosphoserine).

Belongs to the ARTD/PARP family. In terms of assembly, interacts with MYC. Interacts with PARP14. Interacts (via-PIP box and ubiquitin-interacting motifs) with PCNA. Post-translationally, stimulated through its phosphorylation by CDK2. Acquires CDK-dependent phosphorylation through late-G1 to S phase, and from prometaphase to cytokinesis in the nucleolar organizing regions. Phosphorylation is suppressed in growth-arrested cells. Auto-mono-ADP-ribosylated on glutamate and lysine residues. As to expression, highly expressed in spleen and thymus. Intermediate levels in liver, kidney, pancreas, prostate, testis, ovary, intestine, and leukocytes. Low expression in heart, brain, placenta, lung, skeletal muscle, and colon.

The protein localises to the nucleus. It localises to the nucleolus. Its subcellular location is the cytoplasm. The enzyme catalyses L-lysyl-[protein] + NAD(+) = N(6)-(ADP-D-ribosyl)-L-lysyl-[protein] + nicotinamide + H(+). It catalyses the reaction L-aspartyl-[protein] + NAD(+) = 4-O-(ADP-D-ribosyl)-L-aspartyl-[protein] + nicotinamide. It carries out the reaction L-glutamyl-[protein] + NAD(+) = 5-O-(ADP-D-ribosyl)-L-glutamyl-[protein] + nicotinamide. Its function is as follows. ADP-ribosyltransferase that mediates mono-ADP-ribosylation of glutamate and aspartate residues on target proteins. In contrast to PARP1 and PARP2, it is not able to mediate poly-ADP-ribosylation. Catalyzes mono-ADP-ribosylation of GSK3B, leading to negatively regulate GSK3B kinase activity. Involved in translesion DNA synthesis in response to DNA damage via its interaction with PCNA. The polypeptide is Protein mono-ADP-ribosyltransferase PARP10 (Homo sapiens (Human)).